Consider the following 78-residue polypeptide: Large ribosomal subunit protein bL28 (78 aa).

This sequence belongs to the bacterial ribosomal protein bL28 family.

This is Large ribosomal subunit protein bL28 from Flavobacterium psychrophilum (strain ATCC 49511 / DSM 21280 / CIP 103535 / JIP02/86).